A 331-amino-acid polypeptide reads, in one-letter code: Glyceraldehyde-3-phosphate dehydrogenase (331 aa).

NAD(+) is bound by residues 12–13 (RI), D34, R78, and T120. Residues 149–151 (SCT), T180, 209–210 (TG), and R232 each bind D-glyceraldehyde 3-phosphate. C150 serves as the catalytic Nucleophile. N314 is a binding site for NAD(+).

The protein belongs to the glyceraldehyde-3-phosphate dehydrogenase family. Homotetramer.

Its subcellular location is the cytoplasm. It catalyses the reaction D-glyceraldehyde 3-phosphate + phosphate + NAD(+) = (2R)-3-phospho-glyceroyl phosphate + NADH + H(+). Its pathway is carbohydrate degradation; glycolysis; pyruvate from D-glyceraldehyde 3-phosphate: step 1/5. Functionally, catalyzes the oxidative phosphorylation of glyceraldehyde 3-phosphate (G3P) to 1,3-bisphosphoglycerate (BPG) using the cofactor NAD. The first reaction step involves the formation of a hemiacetal intermediate between G3P and a cysteine residue, and this hemiacetal intermediate is then oxidized to a thioester, with concomitant reduction of NAD to NADH. The reduced NADH is then exchanged with the second NAD, and the thioester is attacked by a nucleophilic inorganic phosphate to produce BPG. The chain is Glyceraldehyde-3-phosphate dehydrogenase (gapA) from Escherichia fergusonii (strain ATCC 35469 / DSM 13698 / CCUG 18766 / IAM 14443 / JCM 21226 / LMG 7866 / NBRC 102419 / NCTC 12128 / CDC 0568-73).